Reading from the N-terminus, the 177-residue chain is uncharacterized protein (177 aa).

This is an uncharacterized protein from Treponema pallidum (strain Nichols).